The primary structure comprises 187 residues: Interferon alpha-3 (187 aa).

A signal peptide spans 1-23; that stretch reads MALPCSFSVALVLLSCHSLCCLA. 2 cysteine pairs are disulfide-bonded: cysteine 24–cysteine 122 and cysteine 52–cysteine 160. Asparagine 94 and asparagine 101 each carry an N-linked (GlcNAc...) asparagine glycan.

The protein belongs to the alpha/beta interferon family.

The protein resides in the secreted. Produced by macrophages, IFN-alpha have antiviral activities. Interferon stimulates the production of two enzymes: a protein kinase and an oligoadenylate synthetase. This chain is Interferon alpha-3, found in Canis lupus familiaris (Dog).